The primary structure comprises 176 residues: Large ribosomal subunit protein bL17m (176 aa).

A mitochondrion-targeting transit peptide spans 1–8 (MRLSLAAA).

It belongs to the bacterial ribosomal protein bL17 family. As to quaternary structure, component of the mitochondrial ribosome large subunit (39S) which comprises a 16S rRNA and about 50 distinct proteins.

The protein resides in the mitochondrion. In Mus musculus (Mouse), this protein is Large ribosomal subunit protein bL17m (Mrpl17).